The chain runs to 297 residues: Bifunctional protein FolD 2 (297 aa).

NADP(+)-binding positions include G164–S166, S193, and I234.

Belongs to the tetrahydrofolate dehydrogenase/cyclohydrolase family. Homodimer.

The catalysed reaction is (6R)-5,10-methylene-5,6,7,8-tetrahydrofolate + NADP(+) = (6R)-5,10-methenyltetrahydrofolate + NADPH. It carries out the reaction (6R)-5,10-methenyltetrahydrofolate + H2O = (6R)-10-formyltetrahydrofolate + H(+). The protein operates within one-carbon metabolism; tetrahydrofolate interconversion. Functionally, catalyzes the oxidation of 5,10-methylenetetrahydrofolate to 5,10-methenyltetrahydrofolate and then the hydrolysis of 5,10-methenyltetrahydrofolate to 10-formyltetrahydrofolate. This chain is Bifunctional protein FolD 2, found in Haloarcula marismortui (strain ATCC 43049 / DSM 3752 / JCM 8966 / VKM B-1809) (Halobacterium marismortui).